The sequence spans 187 residues: Peptide deformylase (187 aa).

Residues C96 and H138 each coordinate Fe cation. E139 is a catalytic residue. H142 is a Fe cation binding site.

It belongs to the polypeptide deformylase family. It depends on Fe(2+) as a cofactor.

It catalyses the reaction N-terminal N-formyl-L-methionyl-[peptide] + H2O = N-terminal L-methionyl-[peptide] + formate. Removes the formyl group from the N-terminal Met of newly synthesized proteins. Requires at least a dipeptide for an efficient rate of reaction. N-terminal L-methionine is a prerequisite for activity but the enzyme has broad specificity at other positions. The protein is Peptide deformylase of Brachyspira hyodysenteriae (strain ATCC 49526 / WA1).